A 429-amino-acid polypeptide reads, in one-letter code: MAPIALKILLFTSLIVPSISLSDQARNGHARTICEVKPGGSSEIDDVPAIVDALTTCGSGGRVIFSNNTYHINSVMNTTWLDDVEIDLQGTLLWSTNISYWLNHSLPVGYQNQSTAWILGGKDIVFEGHGYGTFNGSGQTWYRYVGSTSNYPRRPNQLTVSGAMGAVFKGLRFVQSQMWTMSIIHTSNSWFDSIYVNNLYDDGGSAQNTDGANTIYSKNITLTNWEVVNGDDSISTKANSTDITIANCTFTSGLGIAIGSIGQYNGAFETVERLKISNITYEKTTHAVYFKTWTGDQVGYPPNGGGGGLGYASDIVATNLKTNNLKGAPFTISQCTTFSGASGNCTNSKFQIRDLVFTDISGTTDSSDVASFQCSAVAPCEDITIENVSLRIAGNTTHAEEYLCGNVDGTVGFNCTGDVCVGSSATGGC.

An N-terminal signal peptide occupies residues 1 to 20; sequence MAPIALKILLFTSLIVPSIS. N-linked (GlcNAc...) asparagine glycosylation is found at Asn67, Asn77, Asn97, Asn103, Asn112, Asn135, and Asn219. The PbH1 1 repeat unit spans residues 217–238; the sequence is SKNITLTNWEVVNGDDSISTKA. Asp231 functions as the Proton donor in the catalytic mechanism. N-linked (GlcNAc...) asparagine glycans are attached at residues Asn239, Asn247, Asn278, and Asn344. PbH1 repeat units lie at residues 240 to 260 and 271 to 292; these read STDITIANCTFTSGLGIAIGS and VERLKISNITYEKTTHAVYFKT. The cysteines at positions 374 and 380 are disulfide-linked. 3 N-linked (GlcNAc...) asparagine glycosylation sites follow: Asn387, Asn395, and Asn414.

The protein belongs to the glycosyl hydrolase 28 family.

The protein localises to the secreted. The catalysed reaction is Hydrolysis of terminal non-reducing alpha-L-rhamnose residues in alpha-L-rhamnosides.. Its function is as follows. Alpha-L-rhamnosidase which is able to degrade p-nitrophenyl-alpha-L-rhamnopyranoside (pnp_Rha). The natural substrate of this enzyme has not been identified yet. The polypeptide is Alpha-L-rhamnosidase rgxB (rgxB) (Aspergillus niger (strain ATCC MYA-4892 / CBS 513.88 / FGSC A1513)).